We begin with the raw amino-acid sequence, 150 residues long: Clitocypin (150 aa).

It belongs to the protease inhibitor I48 family. As to quaternary structure, homodimer. In terms of tissue distribution, uniformly expressed throughout the mature fruiting body (at mRNA and protein level).

Its function is as follows. Binds and inhibits cysteine proteinases. Inhibits most strongly papain and cathepsin L, more weakly bromelain and cathepsin B while it is completely ineffective against cathepsin H. The polypeptide is Clitocypin (Cnc1) (Clitocybe nebularis (Clouded agaric)).